We begin with the raw amino-acid sequence, 420 residues long: UDP-N-acetylglucosamine 1-carboxyvinyltransferase (420 aa).

Phosphoenolpyruvate is bound at residue 22-23; the sequence is KN. R91 contacts UDP-N-acetyl-alpha-D-glucosamine. Catalysis depends on C115, which acts as the Proton donor. Residue C115 is modified to 2-(S-cysteinyl)pyruvic acid O-phosphothioketal. Residues 120–124, 160–163, D305, and I327 contribute to the UDP-N-acetyl-alpha-D-glucosamine site; these read RPVDL and KVSV.

It belongs to the EPSP synthase family. MurA subfamily.

The protein resides in the cytoplasm. The catalysed reaction is phosphoenolpyruvate + UDP-N-acetyl-alpha-D-glucosamine = UDP-N-acetyl-3-O-(1-carboxyvinyl)-alpha-D-glucosamine + phosphate. Its pathway is cell wall biogenesis; peptidoglycan biosynthesis. In terms of biological role, cell wall formation. Adds enolpyruvyl to UDP-N-acetylglucosamine. The sequence is that of UDP-N-acetylglucosamine 1-carboxyvinyltransferase from Pectobacterium atrosepticum (strain SCRI 1043 / ATCC BAA-672) (Erwinia carotovora subsp. atroseptica).